The primary structure comprises 657 residues: Wall-associated receptor kinase-like 20 (657 aa).

A signal peptide spans 1–23; sequence MEKKRSYYALLIPTLLTVWLACA. Topologically, residues 24–293 are extracellular; it reads GHSCARHAKA…KHCKKKKKTV (270 aa). Residue Asn140 is glycosylated (N-linked (GlcNAc...) asparagine). Residues 294 to 314 form a helical membrane-spanning segment; that stretch reads VFAGAAVAVVGVTLAIAVAVI. The Cytoplasmic portion of the chain corresponds to 315–657; it reads GTKHSHQKVK…NILSQEVTET (343 aa). In terms of domain architecture, Protein kinase spans 363–646; it reads FSKDNLIGTG…KEVADEIEYI (284 aa). ATP-binding positions include 369–377 and Lys391; that span reads IGTGGFGEV. The active-site Proton acceptor is Asp490.

This sequence belongs to the protein kinase superfamily. Ser/Thr protein kinase family.

The protein localises to the membrane. It catalyses the reaction L-seryl-[protein] + ATP = O-phospho-L-seryl-[protein] + ADP + H(+). The catalysed reaction is L-threonyl-[protein] + ATP = O-phospho-L-threonyl-[protein] + ADP + H(+). In terms of biological role, serine/threonine-protein kinase that may function as a signaling receptor of extracellular matrix component. In Arabidopsis thaliana (Mouse-ear cress), this protein is Wall-associated receptor kinase-like 20 (WAKL20).